Consider the following 428-residue polypeptide: Serine--tRNA ligase (428 aa).

235–237 (TAE) lines the L-serine pocket. 266–268 (RYE) lines the ATP pocket. Glu-289 serves as a coordination point for L-serine. 353–356 (EVSS) is a binding site for ATP. Ser-389 is an L-serine binding site.

This sequence belongs to the class-II aminoacyl-tRNA synthetase family. Type-1 seryl-tRNA synthetase subfamily. In terms of assembly, homodimer. The tRNA molecule binds across the dimer.

It localises to the cytoplasm. The enzyme catalyses tRNA(Ser) + L-serine + ATP = L-seryl-tRNA(Ser) + AMP + diphosphate + H(+). It catalyses the reaction tRNA(Sec) + L-serine + ATP = L-seryl-tRNA(Sec) + AMP + diphosphate + H(+). It functions in the pathway aminoacyl-tRNA biosynthesis; selenocysteinyl-tRNA(Sec) biosynthesis; L-seryl-tRNA(Sec) from L-serine and tRNA(Sec): step 1/1. In terms of biological role, catalyzes the attachment of serine to tRNA(Ser). Is also able to aminoacylate tRNA(Sec) with serine, to form the misacylated tRNA L-seryl-tRNA(Sec), which will be further converted into selenocysteinyl-tRNA(Sec). In Blochmanniella pennsylvanica (strain BPEN), this protein is Serine--tRNA ligase.